The sequence spans 1031 residues: Probable ATP-dependent RNA helicase DDX46 (1031 aa).

Basic residues predominate over residues 1-24; the sequence is MGRESRHYRKRSASRGRSGSRSRS. The disordered stretch occupies residues 1–228; that stretch reads MGRESRHYRK…EMEGEELDPL (228 aa). Glycine 2 carries N-myristoyl glycine lipidation. Residues 26-49 are compositionally biased toward basic and acidic residues; sequence SPSDKRSKRGDDRRSRSRDRDRRR. 2 stretches are compositionally biased toward basic residues: residues 50 to 73 and 81 to 103; these read ERSR…RSRS and ERRR…RRSR. Over residues 112 to 200 the composition is skewed to basic and acidic residues; sequence KKTENRSRSK…EMKQGKKWSL (89 aa). Positions 152 to 197 form a coiled coil; that stretch reads DQNKLEEEMRKRKERVEKWREEQRKKAMENIGELKKEIEEMKQGKK. Lysine 186 is covalently cross-linked (Glycyl lysine isopeptide (Lys-Gly) (interchain with G-Cter in SUMO2)). Phosphoserine is present on serine 199. 2 stretches are compositionally biased toward acidic residues: residues 201 to 211 and 219 to 228; these read EDDDDDEDDPA and EMEGEELDPL. Residue lysine 263 is modified to N6-acetyllysine. The residue at position 294 (tyrosine 294) is a Phosphotyrosine. Serine 295 and serine 296 each carry phosphoserine. Lysine 325 is covalently cross-linked (Glycyl lysine isopeptide (Lys-Gly) (interchain with G-Cter in SUMO2)). Serine 346 bears the Phosphoserine mark. Positions 372–400 match the Q motif motif; the sequence is KSWVQCGISMKILNSLKKHGYEKPTPIQT. The region spanning 403 to 581 is the Helicase ATP-binding domain; sequence IPAIMSGRDL…RRILSKPIEV (179 aa). 416–423 contributes to the ATP binding site; that stretch reads AKTGSGKT. A DEAD box motif is present at residues 529-532; the sequence is DEAD. The region spanning 592 to 753 is the Helicase C-terminal domain; the sequence is DVEQQVIVIE…AVPPDLEKLW (162 aa). An N6-acetyllysine modification is found at lysine 776. Lysine 779 is covalently cross-linked (Glycyl lysine isopeptide (Lys-Gly) (interchain with G-Cter in SUMO2)). Serine 804 carries the post-translational modification Phosphoserine. Lysine 903 is modified (N6-acetyllysine). Glycyl lysine isopeptide (Lys-Gly) (interchain with G-Cter in SUMO2) cross-links involve residues lysine 907 and lysine 915. Serine 928 bears the Phosphoserine mark.

Belongs to the DEAD box helicase family. DDX46/PRP5 subfamily. As to quaternary structure, component of the 17S U2 SnRNP complex, a ribonucleoprotein complex that contains small nuclear RNA (snRNA) U2 and a number of specific proteins. Within the 17S U2 SnRNP complex, DDX46 is part of the SF3B subcomplex, which is required for 'A' complex assembly formed by the stable binding of U2 snRNP to the branchpoint sequence in pre-mRNA. Recruited to the 17S U2 SnRNP complex following release of DDX42; DDX42 and DDX46 bind the SF3B subcomplex in a competitive manner.

It localises to the nucleus speckle. Its subcellular location is the nucleus. The protein resides in the cajal body. It catalyses the reaction ATP + H2O = ADP + phosphate + H(+). Component of the 17S U2 SnRNP complex of the spliceosome, a large ribonucleoprotein complex that removes introns from transcribed pre-mRNAs. The 17S U2 SnRNP complex (1) directly participates in early spliceosome assembly and (2) mediates recognition of the intron branch site during pre-mRNA splicing by promoting the selection of the pre-mRNA branch-site adenosine, the nucleophile for the first step of splicing. Within the 17S U2 SnRNP complex, DDX46 plays essential roles during assembly of pre-spliceosome and proofreading of the branch site. In Homo sapiens (Human), this protein is Probable ATP-dependent RNA helicase DDX46.